Reading from the N-terminus, the 349-residue chain is Phosphoribosylformylglycinamidine cyclo-ligase (349 aa).

It belongs to the AIR synthase family.

It is found in the cytoplasm. The enzyme catalyses 2-formamido-N(1)-(5-O-phospho-beta-D-ribosyl)acetamidine + ATP = 5-amino-1-(5-phospho-beta-D-ribosyl)imidazole + ADP + phosphate + H(+). It participates in purine metabolism; IMP biosynthesis via de novo pathway; 5-amino-1-(5-phospho-D-ribosyl)imidazole from N(2)-formyl-N(1)-(5-phospho-D-ribosyl)glycinamide: step 2/2. The chain is Phosphoribosylformylglycinamidine cyclo-ligase from Lactobacillus delbrueckii subsp. bulgaricus (strain ATCC BAA-365 / Lb-18).